The primary structure comprises 2150 residues: A disintegrin and metalloproteinase with thrombospondin motifs gon-1 (2150 aa).

An N-terminal signal peptide occupies residues 1–28; the sequence is MRSIGGSFHLLQPVVAALILLVVCLVYA. Positions 29–273 are excised as a propeptide; sequence LQSGSGTISE…VIERKARSRR (245 aa). N-linked (GlcNAc...) asparagine glycans are attached at residues Asn134, Asn213, Asn243, and Asn248. Positions 280–493 constitute a Peptidase M12B domain; the sequence is HYVEVLVVAD…GQTQCLFDQP (214 aa). Cystine bridges form between Cys402-Cys488 and Cys440-Cys470. His424 serves as a coordination point for Zn(2+). The active site involves Glu425. 2 residues coordinate Zn(2+): His428 and His434. The Disintegrin domain occupies 503–587; it reads FVRDEPGKKY…RLAPESLTKI (85 aa). Positions 588–643 constitute a TSP type-1 1 domain; sequence DGQWGDWRSWGECSRTCGGGVQKGLRDCDSPKPRNGGKYCVGQRERYRSCNTQECP. 3 cysteine pairs are disulfide-bonded: Cys600–Cys637, Cys604–Cys642, and Cys615–Cys627. Asn842 carries N-linked (GlcNAc...) asparagine glycosylation. 11 TSP type-1 domains span residues 943-1003, 1004-1057, 1060-1115, 1116-1165, 1168-1227, 1228-1277, 1280-1339, 1352-1409, 1410-1469, 1474-1524, and 1527-1585; these read CSTR…IDCS, GRKW…RECN, PCPR…HACT, WWQF…KPCH, SCPK…GTCP, FWRN…QTCH, PCTS…DTCD, PPIR…RDCS, YWKM…EPCP, HIGS…ELCP, and TNNS…PPCR. Asn1139 and Asn1199 each carry an N-linked (GlcNAc...) asparagine glycan. N-linked (GlcNAc...) asparagine glycosylation is found at Asn1370 and Asn1432. Asn1528, Asn1590, Asn1606, and Asn1654 each carry an N-linked (GlcNAc...) asparagine glycan. Residues 1590-1614 are disordered; the sequence is NKTSSASMTSLSSSNSNTTSSASAS. Positions 1592-1614 are enriched in low complexity; the sequence is TSSASMTSLSSSNSNTTSSASAS. 5 consecutive TSP type-1 domains span residues 1621–1675, 1678–1736, 1737–1793, 1794–1866, and 1867–1924; these read PVVS…VRCR, HCPR…VACP, AYRW…DTSN, CPYE…NPCD, and SEFK…RNCL. Cystine bridges form between Cys1679–Cys1718, Cys1690–Cys1694, Cys1690–Cys1730, Cys1694–Cys1735, Cys1705–Cys1718, and Cys1730–Cys1735. N-linked (GlcNAc...) asparagine glycans are attached at residues Asn1828 and Asn1855. One can recognise a GON domain in the interval 1924 to 2123; the sequence is LPSTCQELKS…RYKGLIFEVN (200 aa). N-linked (GlcNAc...) asparagine glycans are attached at residues Asn1942, Asn1960, and Asn1997.

Zn(2+) is required as a cofactor. Expressed by the gonadal distal tip cells (DTCs). Expressed in muscles, including body wall, vulval and anal depressor muscles. Expressed in motor neurons and in ASI and ASJ neurons.

It localises to the secreted. Its subcellular location is the extracellular space. It is found in the extracellular matrix. The protein localises to the basement membrane. The protein resides in the endoplasmic reticulum. It localises to the golgi apparatus. Functionally, secreted metalloprotease required for distal tip cell (DTC) migration along the body wall basement membranes, a key step that promotes gonad morphogenesis. Probably acts by remodeling the basement membrane during cell migration. Required to restrict presynaptic growth at the neuromuscular junctions (NMJ) in late larval stage and in adult motor neurons, probably by controlling collagen IV emb-9 degradation, a component of the synapse basement membrane. Also involved in the organization of adult muscle morphology. Has a protease-independent function in promoting the transport from the endoplasmic reticulum to the Golgi apparatus of a variety of secretory cargos. Required for the secretion of insulin-like peptide ins-7, daf-28 and ins-18 and TGF beta-like protein daf-7. In peripheral tissues, negatively regulates insulin-mediated daf-16 translocation and thereby negatively regulates lifespan and dauer formation. This is A disintegrin and metalloproteinase with thrombospondin motifs gon-1 from Caenorhabditis elegans.